Consider the following 77-residue polypeptide: Conotoxin ArMKLT2-0251 (77 aa).

Positions 1 to 22 are cleaved as a signal peptide; sequence MKLTCVLIVAVLILTACQLIAA. Residues 23–46 constitute a propeptide that is removed on maturation; sequence DDSRDLKRFSRRKMRDGMLNTKNM. Gln49 carries the post-translational modification Pyrrolidone carboxylic acid. 3 disulfide bridges follow: Cys50-Cys65, Cys57-Cys68, and Cys64-Cys73.

Belongs to the conotoxin O1 superfamily. As to expression, expressed by the venom duct.

Its subcellular location is the secreted. In Conus arenatus (Sand-dusted cone), this protein is Conotoxin ArMKLT2-0251.